Reading from the N-terminus, the 396-residue chain is Tryptophan synthase beta chain (396 aa).

An N6-(pyridoxal phosphate)lysine modification is found at K86.

It belongs to the TrpB family. In terms of assembly, tetramer of two alpha and two beta chains. Requires pyridoxal 5'-phosphate as cofactor.

The enzyme catalyses (1S,2R)-1-C-(indol-3-yl)glycerol 3-phosphate + L-serine = D-glyceraldehyde 3-phosphate + L-tryptophan + H2O. Its pathway is amino-acid biosynthesis; L-tryptophan biosynthesis; L-tryptophan from chorismate: step 5/5. In terms of biological role, the beta subunit is responsible for the synthesis of L-tryptophan from indole and L-serine. The polypeptide is Tryptophan synthase beta chain (Proteus mirabilis (strain HI4320)).